Here is a 407-residue protein sequence, read N- to C-terminus: Imidazolonepropionase (407 aa).

Fe(3+)-binding residues include His74 and His76. His74 and His76 together coordinate Zn(2+). Positions 83, 146, and 179 each coordinate 4-imidazolone-5-propanoate. Residue Tyr146 participates in N-formimidoyl-L-glutamate binding. A Fe(3+)-binding site is contributed by His244. Zn(2+) is bound at residue His244. Gln247 provides a ligand contact to 4-imidazolone-5-propanoate. Asp319 lines the Fe(3+) pocket. Asp319 contributes to the Zn(2+) binding site. N-formimidoyl-L-glutamate contacts are provided by Asn321 and Gly323. Thr324 lines the 4-imidazolone-5-propanoate pocket.

The protein belongs to the metallo-dependent hydrolases superfamily. HutI family. Zn(2+) serves as cofactor. It depends on Fe(3+) as a cofactor.

Its subcellular location is the cytoplasm. It carries out the reaction 4-imidazolone-5-propanoate + H2O = N-formimidoyl-L-glutamate. Its pathway is amino-acid degradation; L-histidine degradation into L-glutamate; N-formimidoyl-L-glutamate from L-histidine: step 3/3. Catalyzes the hydrolytic cleavage of the carbon-nitrogen bond in imidazolone-5-propanoate to yield N-formimidoyl-L-glutamate. It is the third step in the universal histidine degradation pathway. In Salmonella enteritidis PT4 (strain P125109), this protein is Imidazolonepropionase.